The following is a 561-amino-acid chain: MKYIVMQDVFFVVLLLVLAVPLGIYMYKVMIGEKVFLSRVLEPVERFGYRLMGVSEVGMSAKRYAVSVLAFSAVGFVFVMAVLMLQGFLPLNPEGMKGLSFSLAFNTAASFVSNTNWQAYSGETALSYFSQSIGLTVQNFVSAATGIAVLFAVIRGFIWKKQKTVGNFWQDLFRVTLYILLPLSLILALLLVSQGVVQSFADYSVVETLENGAKQLIPLGPAASQIAIKQLGTNGGGFFGANSAFPFENPSSFTNLIEMLAILLIPVALVVMFGRAVKDSKQGRAIMTAMMIVFVIGVVAITISEQFAGPSYQGVATSGSMEGKEVRFGVGGSSLFAASTTAASNGAVNAMHDSLTPLGGLVPMFFMQLGEVIFGGVGSGLYGMIGFIILTVFIAGLLVGRTPEYLGKKIEPYDMKMVCLLILVPPLLTLFGTAVAVMMPSVQASVSASGAHGFSEVLYAFTSMGNNNGSAFAGFAADTTFTNMVGAVMMLLARFIPLVAALYLAQNMAGKSSVAASSGTLSTKNGMFIGLLIGVVVLVGALSFLPALALGPIADFFTTFK.

A run of 10 helical transmembrane segments spans residues 4 to 24, 65 to 85, 133 to 153, 177 to 197, 253 to 273, 285 to 305, 380 to 400, 417 to 437, 484 to 504, and 528 to 548; these read IVMQ…PLGI, AVSV…VLML, IGLT…LFAV, LYIL…QGVV, FTNL…VVMF, AIMT…TISE, GLYG…LLVG, MVCL…AVAV, MVGA…ALYL, and FIGL…LPAL.

The protein belongs to the KdpA family. As to quaternary structure, the system is composed of three essential subunits: KdpA, KdpB and KdpC.

The protein localises to the cell membrane. In terms of biological role, part of the high-affinity ATP-driven potassium transport (or Kdp) system, which catalyzes the hydrolysis of ATP coupled with the electrogenic transport of potassium into the cytoplasm. This subunit binds the extracellular potassium ions and delivers the ions to the membrane domain of KdpB through an intramembrane tunnel. This is Potassium-transporting ATPase potassium-binding subunit from Listeria monocytogenes serovar 1/2a (strain ATCC BAA-679 / EGD-e).